Reading from the N-terminus, the 153-residue chain is NAD(P)H-quinone oxidoreductase subunit N (153 aa).

This sequence belongs to the complex I NdhN subunit family. NDH-1 can be composed of about 15 different subunits; different subcomplexes with different compositions have been identified which probably have different functions.

It is found in the cellular thylakoid membrane. It catalyses the reaction a plastoquinone + NADH + (n+1) H(+)(in) = a plastoquinol + NAD(+) + n H(+)(out). The catalysed reaction is a plastoquinone + NADPH + (n+1) H(+)(in) = a plastoquinol + NADP(+) + n H(+)(out). Functionally, NDH-1 shuttles electrons from an unknown electron donor, via FMN and iron-sulfur (Fe-S) centers, to quinones in the respiratory and/or the photosynthetic chain. The immediate electron acceptor for the enzyme in this species is believed to be plastoquinone. Couples the redox reaction to proton translocation, and thus conserves the redox energy in a proton gradient. Cyanobacterial NDH-1 also plays a role in inorganic carbon-concentration. The protein is NAD(P)H-quinone oxidoreductase subunit N of Synechococcus sp. (strain WH7803).